The following is a 212-amino-acid chain: Imidazole glycerol phosphate synthase subunit HisH (212 aa).

A Glutamine amidotransferase type-1 domain is found at Ser3–Pro212. Catalysis depends on Cys82, which acts as the Nucleophile. Catalysis depends on residues His192 and Glu194.

In terms of assembly, heterodimer of HisH and HisF.

It localises to the cytoplasm. The enzyme catalyses 5-[(5-phospho-1-deoxy-D-ribulos-1-ylimino)methylamino]-1-(5-phospho-beta-D-ribosyl)imidazole-4-carboxamide + L-glutamine = D-erythro-1-(imidazol-4-yl)glycerol 3-phosphate + 5-amino-1-(5-phospho-beta-D-ribosyl)imidazole-4-carboxamide + L-glutamate + H(+). It carries out the reaction L-glutamine + H2O = L-glutamate + NH4(+). The protein operates within amino-acid biosynthesis; L-histidine biosynthesis; L-histidine from 5-phospho-alpha-D-ribose 1-diphosphate: step 5/9. IGPS catalyzes the conversion of PRFAR and glutamine to IGP, AICAR and glutamate. The HisH subunit catalyzes the hydrolysis of glutamine to glutamate and ammonia as part of the synthesis of IGP and AICAR. The resulting ammonia molecule is channeled to the active site of HisF. The polypeptide is Imidazole glycerol phosphate synthase subunit HisH (Nitrosomonas europaea (strain ATCC 19718 / CIP 103999 / KCTC 2705 / NBRC 14298)).